Consider the following 523-residue polypeptide: Apolipoprotein N-acyltransferase (523 aa).

The next 7 membrane-spanning stretches (helical) occupy residues leucine 26–proline 46, tryptophan 49–glutamine 66, alanine 74–isoleucine 94, alanine 109–tryptophan 129, glutamine 137–leucine 157, leucine 185–alanine 205, and tryptophan 212–alanine 232. The region spanning leucine 246–glycine 487 is the CN hydrolase domain. The Proton acceptor role is filled by glutamate 284. Lysine 345 is a catalytic residue. Cysteine 395 acts as the Nucleophile in catalysis. The helical transmembrane segment at phenylalanine 494–leucine 514 threads the bilayer.

It belongs to the CN hydrolase family. Apolipoprotein N-acyltransferase subfamily.

Its subcellular location is the cell inner membrane. It carries out the reaction N-terminal S-1,2-diacyl-sn-glyceryl-L-cysteinyl-[lipoprotein] + a glycerophospholipid = N-acyl-S-1,2-diacyl-sn-glyceryl-L-cysteinyl-[lipoprotein] + a 2-acyl-sn-glycero-3-phospholipid + H(+). Its pathway is protein modification; lipoprotein biosynthesis (N-acyl transfer). Its function is as follows. Catalyzes the phospholipid dependent N-acylation of the N-terminal cysteine of apolipoprotein, the last step in lipoprotein maturation. This is Apolipoprotein N-acyltransferase from Ralstonia nicotianae (strain ATCC BAA-1114 / GMI1000) (Ralstonia solanacearum).